We begin with the raw amino-acid sequence, 651 residues long: DNA mismatch repair protein MutL (651 aa).

A disordered region spans residues 336-398 (RLDMTEPETG…ANSGYQPENP (63 aa)). Over residues 385–394 (ARESANSGYQ) the composition is skewed to polar residues.

Belongs to the DNA mismatch repair MutL/HexB family.

Its function is as follows. This protein is involved in the repair of mismatches in DNA. It is required for dam-dependent methyl-directed DNA mismatch repair. May act as a 'molecular matchmaker', a protein that promotes the formation of a stable complex between two or more DNA-binding proteins in an ATP-dependent manner without itself being part of a final effector complex. This is DNA mismatch repair protein MutL from Pectobacterium atrosepticum (strain SCRI 1043 / ATCC BAA-672) (Erwinia carotovora subsp. atroseptica).